The sequence spans 447 residues: Diaminopimelate decarboxylase (447 aa).

The residue at position 72 (lysine 72) is an N6-(pyridoxal phosphate)lysine. Residues glycine 258 and glutamate 300 to arginine 303 contribute to the pyridoxal 5'-phosphate site. Substrate contacts are provided by arginine 303, arginine 344, and tyrosine 348. Residue cysteine 375 is the Proton donor of the active site. Substrate-binding residues include glutamate 376 and tyrosine 405. Tyrosine 405 contributes to the pyridoxal 5'-phosphate binding site.

It belongs to the Orn/Lys/Arg decarboxylase class-II family. LysA subfamily. Homodimer. Pyridoxal 5'-phosphate is required as a cofactor.

It carries out the reaction meso-2,6-diaminopimelate + H(+) = L-lysine + CO2. It functions in the pathway amino-acid biosynthesis; L-lysine biosynthesis via DAP pathway; L-lysine from DL-2,6-diaminopimelate: step 1/1. Its function is as follows. Specifically catalyzes the decarboxylation of meso-diaminopimelate (meso-DAP) to L-lysine. This chain is Diaminopimelate decarboxylase, found in Mycobacterium bovis (strain ATCC BAA-935 / AF2122/97).